Reading from the N-terminus, the 471-residue chain is Putative multidrug resistance protein MdtD (471 aa).

At 1-11 the chain is on the periplasmic side; the sequence is MTDLPDSTRWQ. The helical transmembrane segment at 12 to 32 threads the bilayer; that stretch reads LWIVAFGFFMQSLDTTIVNTA. Residues 33–48 lie on the Cytoplasmic side of the membrane; that stretch reads LPSMAQSLGESPLHMH. Residues 49 to 69 traverse the membrane as a helical segment; it reads MVIVSYVLTVAVMLPASGWLA. Residues 70–76 are Periplasmic-facing; that stretch reads DKVGVRN. The helical transmembrane segment at 77-97 threads the bilayer; it reads IFFTAIVLFTLGSLFCALSGT. At 98–101 the chain is on the cytoplasmic side; it reads LNEL. A helical membrane pass occupies residues 102-124; it reads LLARALQGVGGAMMVPVGRLTVM. Residues 125-137 are Periplasmic-facing; that stretch reads KIVPREQYMAAMT. A helical transmembrane segment spans residues 138–158; it reads FVTLPGQVGPLLGPALGGLLV. Over 159–164 the chain is Cytoplasmic; the sequence is EYASWH. Residues 165-185 form a helical membrane-spanning segment; it reads WIFLINIPVGIIGAIATLMLM. Topologically, residues 186–196 are periplasmic; that stretch reads PNYTMQTRRFD. The helical transmembrane segment at 197–217 threads the bilayer; the sequence is LSGFLLLAVGMAVLTLALDGS. Over 218–224 the chain is Cytoplasmic; the sequence is KGTGLSP. The chain crosses the membrane as a helical span at residues 225 to 245; that stretch reads LAITGLVAVGVVALVLYLLHA. Topologically, residues 246–262 are periplasmic; it reads RNNHRALFSLKLFRTRT. A helical transmembrane segment spans residues 263-283; sequence FSLGLAGSFAGRIGSGMLPFM. Over 284-285 the chain is Cytoplasmic; sequence TP. Residues 286-306 form a helical membrane-spanning segment; sequence VFLQIGLGFSPFHAGLMMIPM. The Periplasmic segment spans residues 307-341; the sequence is VLGSMGMKRIVVQVVNRFGYRRVLVATTLGLSLVT. A helical transmembrane segment spans residues 342-362; that stretch reads LLFMTTALLGWYYVLPFVLFL. Topologically, residues 363–395 are cytoplasmic; sequence QGMVNSTRFSSMNTLTLKDLPDNLASSGNSLLS. The helical transmembrane segment at 396–416 threads the bilayer; the sequence is MIMQLSMSIGVTIAGLLLGLF. Residues 417 to 430 lie on the Periplasmic side of the membrane; that stretch reads GSQHVSVDSGTTQT. The helical transmembrane segment at 431 to 451 threads the bilayer; it reads VFMYTWLSMAFIIALPAFIFA. The Cytoplasmic segment spans residues 452–471; sequence RVPNDTHQNVAISRRKRSAQ.

It belongs to the major facilitator superfamily. TCR/Tet family.

It is found in the cell inner membrane. This is Putative multidrug resistance protein MdtD from Escherichia coli O127:H6 (strain E2348/69 / EPEC).